The primary structure comprises 492 residues: Probable malate:quinone oxidoreductase 1 (492 aa).

This sequence belongs to the MQO family. Requires FAD as cofactor.

It carries out the reaction (S)-malate + a quinone = a quinol + oxaloacetate. It functions in the pathway carbohydrate metabolism; tricarboxylic acid cycle; oxaloacetate from (S)-malate (quinone route): step 1/1. This chain is Probable malate:quinone oxidoreductase 1, found in Staphylococcus aureus (strain MRSA252).